Reading from the N-terminus, the 397-residue chain is Succinate--CoA ligase [ADP-forming] subunit beta (397 aa).

The ATP-grasp domain maps to 9–254 (KALLKGYGAP…ETEEDAKEIE (246 aa)). ATP-binding positions include K46, 53–55 (GRG), E109, A112, and E117. 2 residues coordinate Mg(2+): N209 and D223. Substrate is bound by residues N274 and 331-333 (GIM).

The protein belongs to the succinate/malate CoA ligase beta subunit family. In terms of assembly, heterotetramer of two alpha and two beta subunits. Requires Mg(2+) as cofactor.

The enzyme catalyses succinate + ATP + CoA = succinyl-CoA + ADP + phosphate. The catalysed reaction is GTP + succinate + CoA = succinyl-CoA + GDP + phosphate. It functions in the pathway carbohydrate metabolism; tricarboxylic acid cycle; succinate from succinyl-CoA (ligase route): step 1/1. Functionally, succinyl-CoA synthetase functions in the citric acid cycle (TCA), coupling the hydrolysis of succinyl-CoA to the synthesis of either ATP or GTP and thus represents the only step of substrate-level phosphorylation in the TCA. The beta subunit provides nucleotide specificity of the enzyme and binds the substrate succinate, while the binding sites for coenzyme A and phosphate are found in the alpha subunit. This chain is Succinate--CoA ligase [ADP-forming] subunit beta, found in Rhizobium etli (strain ATCC 51251 / DSM 11541 / JCM 21823 / NBRC 15573 / CFN 42).